The chain runs to 641 residues: XK-related protein 6 (641 aa).

Disordered regions lie at residues 20-47 (LDEAVGSGGEEDGEPGGGGCGGGGDGSE) and 84-120 (RSAAADGGDQPLQPPAAPGAGRQPPTPSAARPEPPPP). Residues 34–46 (PGGGGCGGGGDGS) are compositionally biased toward gly residues. Residues 107–120 (PPTPSAARPEPPPP) show a composition bias toward pro residues. The next 7 membrane-spanning stretches (helical) occupy residues 130-150 (LWIVLALLVFFGDVGTDLWLA), 159-179 (YVYFGLTLFFVLVPSLLVQSL), 318-338 (TLPCVSSVTSLMSLAWVLASY), 372-392 (VISFALFASIFQLYFGIFVVV), 413-433 (WEEILFNMVVGIVYIFCWFNV), 442-462 (MFAYYTIVLTENAALTFLWYF), and 473-493 (AVPALCCVFISFVAGIAMMLL).

The protein belongs to the XK family.

The protein resides in the cell membrane. This Homo sapiens (Human) protein is XK-related protein 6.